An 874-amino-acid chain; its full sequence is uncharacterized protein (874 aa).

This is an uncharacterized protein from Ostreid herpesvirus 1 (isolate France) (OsHV-1).